Here is a 1767-residue protein sequence, read N- to C-terminus: Trans-Golgi network-localized SYP41-interacting protein 1 (1767 aa).

The interval 1-72 (MHEKDDLPQD…LTTDDDDNDD (72 aa)) is disordered. The Cytoplasmic portion of the chain corresponds to 1-1748 (MHEKDDLPQD…RVLMSRPQAR (1748 aa)). Positions 16–32 (IENDDESNGQEEEELDP) are enriched in acidic residues. 5 coiled-coil regions span residues 276-436 (LSHL…MSTA), 493-516 (VRSLAEERKELTNVSQEYNRLKDL), 570-590 (KSNIRKELDDLSFSLKKMEET), 684-805 (VSNL…LQQS), and 845-1082 (IQEV…LSSK). Residues 1177–1190 (DNSVNTEPENSQGS) show a composition bias toward polar residues. Positions 1177–1198 (DNSVNTEPENSQGSAADEDEIS) are disordered. 4 coiled-coil regions span residues 1251-1310 (NSSL…FQEN), 1362-1424 (IRDM…WHEK), 1522-1542 (LKKATEAESTTELELVKAKNE), and 1603-1630 (LAGSEKLVDKLSLRVKEFEEKLQTKAIQ). A helical; Anchor for type IV membrane protein membrane pass occupies residues 1749 to 1766 (LGVMVYSLLLHLWLLASI). Position 1767 (leucine 1767) is a topological domain, vesicular.

In terms of assembly, interacts with SYP41. In terms of tissue distribution, expressed ubiquitously in roots, leaves and flowers, and, to a lower extent, in stems.

The protein localises to the golgi apparatus. It is found in the trans-Golgi network membrane. Tethering factor involved in vesicle fusion at the trans-Golgi network (TGN) thus being required for efficient protein trafficking to the vacuole. Implicated in resistance to salt and osmotic stresses. Modulates the cell morphology (e.g. epidermal cell file rotation (CFR) and cell expansion) in mature regions of roots and the base of hypocotyls as well as root skewing, a process leading to root movement within the soil in order to maximize anchorage and nutrient acquisition, probably by regulating microtubule stabilization independently of their orientation. This chain is Trans-Golgi network-localized SYP41-interacting protein 1, found in Arabidopsis thaliana (Mouse-ear cress).